The primary structure comprises 493 residues: Trigger factor (493 aa).

Residues 169 to 254 enclose the PPIase FKBP-type domain; it reads GDRVTMDYLG…VKEVAAPAET (86 aa). Residues 439–493 are disordered; the sequence is ELLAEDEDGDDTKPAKKSAKKKAAKAEDASAEGEEAAPKKKAAAKKKAADEGDAE.

Belongs to the FKBP-type PPIase family. Tig subfamily.

The protein resides in the cytoplasm. The catalysed reaction is [protein]-peptidylproline (omega=180) = [protein]-peptidylproline (omega=0). Functionally, involved in protein export. Acts as a chaperone by maintaining the newly synthesized protein in an open conformation. Functions as a peptidyl-prolyl cis-trans isomerase. The sequence is that of Trigger factor from Allorhizobium ampelinum (strain ATCC BAA-846 / DSM 112012 / S4) (Agrobacterium vitis (strain S4)).